The primary structure comprises 170 residues: NADH-quinone oxidoreductase subunit B (170 aa).

[4Fe-4S] cluster-binding residues include C46, C47, C111, and C141.

Belongs to the complex I 20 kDa subunit family. In terms of assembly, NDH-1 is composed of 14 different subunits. Subunits NuoB, C, D, E, F, and G constitute the peripheral sector of the complex. Requires [4Fe-4S] cluster as cofactor.

The protein resides in the cell membrane. It carries out the reaction a quinone + NADH + 5 H(+)(in) = a quinol + NAD(+) + 4 H(+)(out). In terms of biological role, NDH-1 shuttles electrons from NADH, via FMN and iron-sulfur (Fe-S) centers, to quinones in the respiratory chain. The immediate electron acceptor for the enzyme in this species is believed to be a menaquinone. Couples the redox reaction to proton translocation (for every two electrons transferred, four hydrogen ions are translocated across the cytoplasmic membrane), and thus conserves the redox energy in a proton gradient. This is NADH-quinone oxidoreductase subunit B from Geobacillus thermodenitrificans (strain NG80-2).